The primary structure comprises 122 residues: Large ribosomal subunit protein uL18 (122 aa).

Over residues 1 to 11 (MLKKPDRNALR) the composition is skewed to basic and acidic residues. Positions 1–22 (MLKKPDRNALRDKRRRRVRKKI) are disordered. Residues 12-22 (DKRRRRVRKKI) are compositionally biased toward basic residues.

Belongs to the universal ribosomal protein uL18 family. In terms of assembly, part of the 50S ribosomal subunit; part of the 5S rRNA/L5/L18/L25 subcomplex. Contacts the 5S and 23S rRNAs.

Functionally, this is one of the proteins that bind and probably mediate the attachment of the 5S RNA into the large ribosomal subunit, where it forms part of the central protuberance. The sequence is that of Large ribosomal subunit protein uL18 from Pelotomaculum thermopropionicum (strain DSM 13744 / JCM 10971 / SI).